Here is a 425-residue protein sequence, read N- to C-terminus: UDP-N-acetylglucosamine 1-carboxyvinyltransferase (425 aa).

23–24 (KN) is a phosphoenolpyruvate binding site. Residue R100 participates in UDP-N-acetyl-alpha-D-glucosamine binding. The active-site Proton donor is C124. A 2-(S-cysteinyl)pyruvic acid O-phosphothioketal modification is found at C124. UDP-N-acetyl-alpha-D-glucosamine contacts are provided by D313 and I335.

Belongs to the EPSP synthase family. MurA subfamily.

It is found in the cytoplasm. The catalysed reaction is phosphoenolpyruvate + UDP-N-acetyl-alpha-D-glucosamine = UDP-N-acetyl-3-O-(1-carboxyvinyl)-alpha-D-glucosamine + phosphate. It functions in the pathway cell wall biogenesis; peptidoglycan biosynthesis. Its function is as follows. Cell wall formation. Adds enolpyruvyl to UDP-N-acetylglucosamine. In Wolbachia sp. subsp. Brugia malayi (strain TRS), this protein is UDP-N-acetylglucosamine 1-carboxyvinyltransferase.